A 248-amino-acid polypeptide reads, in one-letter code: Probable transcriptional regulatory protein FTL_0929 (248 aa).

The protein belongs to the TACO1 family.

It localises to the cytoplasm. The chain is Probable transcriptional regulatory protein FTL_0929 from Francisella tularensis subsp. holarctica (strain LVS).